The chain runs to 501 residues: Dipeptide and tripeptide permease A (501 aa).

Residues 1–21 (MSTANKKPTESVSLNAFKQPK) are Cytoplasmic-facing. Residues 22-44 (AFYLIFSIELWERFGYYGLQGIM) traverse the membrane as a helical segment. Residues 45–59 (AVYLVKQLGMSEADS) lie on the Periplasmic side of the membrane. The chain crosses the membrane as a helical span at residues 60–80 (ITLFSSFSALVYGLVAIGGWL). The Cytoplasmic segment spans residues 81-89 (GDKILGTKR). The helical transmembrane segment at 90-110 (VIMLGAVVLAIGYALVAWSGH) threads the bilayer. A topological domain (periplasmic) is located at residue D111. The helical transmembrane segment at 112–132 (AGIVYMGMAAIAVGNGLFKAN) threads the bilayer. Residues 133–153 (PSSLLSTCYAKDDPRLDGAFT) lie on the Cytoplasmic side of the membrane. The helical transmembrane segment at 154-174 (MYYMSVNIGSFFSMLATPWLA) threads the bilayer. At 175-178 (ARYG) the chain is on the periplasmic side. Residues 179-199 (WSTAFALSVVGMLITVVNFAF) traverse the membrane as a helical segment. At 200-219 (CQRWVKSYGSKPDFEPINFR) the chain is on the cytoplasmic side. Residues 220–240 (NLLLTIVGIVVLIAVATWLLH) form a helical membrane-spanning segment. The Periplasmic portion of the chain corresponds to 241-246 (NQDIAR). The helical transmembrane segment at 247 to 267 (MVLGVIALGIVIIFGKEAFSM) threads the bilayer. Topologically, residues 268-274 (HGAARRK) are cytoplasmic. The chain crosses the membrane as a helical span at residues 275–295 (MIVAFILMLQAIIFFVLYSQM). Over 296 to 320 (PTSLNFFAIRNVEHSILGIAFEPEQ) the chain is Periplasmic. The chain crosses the membrane as a helical span at residues 321–341 (YQALNPFWIIIGSPILAAIYN). Residues 342–352 (RMGDTLPMPMK) are Cytoplasmic-facing. Residues 353–373 (FAIGMVLCSGAFLILPLGAKF) form a helical membrane-spanning segment. Topologically, residues 374–383 (ANDAGIVSVN) are periplasmic. Residues 384–404 (WLIASYGLQSIGELMISGLGL) traverse the membrane as a helical segment. Over 405-414 (AMVAQLVPQR) the chain is Cytoplasmic. The helical transmembrane segment at 415-435 (LMGFIMGSWFLTTAGANIIGG) threads the bilayer. Residues 436-459 (YVANLMAVPSDVTDPLMSLEVYGR) are Periplasmic-facing. Residues 460-480 (VFMQIGIATAVIAVLMLLTAP) traverse the membrane as a helical segment. Over 481 to 501 (KLNRMTQDDDTAEKGSKAATV) the chain is Cytoplasmic.

Belongs to the major facilitator superfamily. Proton-dependent oligopeptide transporter (POT/PTR) (TC 2.A.17) family. DtpA subfamily.

It localises to the cell inner membrane. In terms of biological role, proton-dependent permease that transports di- and tripeptides. This is Dipeptide and tripeptide permease A from Salmonella typhimurium (strain LT2 / SGSC1412 / ATCC 700720).